Consider the following 787-residue polypeptide: Endonuclease MutS2 (787 aa).

331–338 (GPNTGGKT) is a binding site for ATP. A Smr domain is found at 711–786 (IDVRGKTSDD…EQGVTVVELK (76 aa)).

Belongs to the DNA mismatch repair MutS family. MutS2 subfamily. As to quaternary structure, homodimer. Binds to stalled ribosomes, contacting rRNA.

Functionally, endonuclease that is involved in the suppression of homologous recombination and thus may have a key role in the control of bacterial genetic diversity. In terms of biological role, acts as a ribosome collision sensor, splitting the ribosome into its 2 subunits. Detects stalled/collided 70S ribosomes which it binds and splits by an ATP-hydrolysis driven conformational change. Acts upstream of the ribosome quality control system (RQC), a ribosome-associated complex that mediates the extraction of incompletely synthesized nascent chains from stalled ribosomes and their subsequent degradation. Probably generates substrates for RQC. The sequence is that of Endonuclease MutS2 from Caldicellulosiruptor bescii (strain ATCC BAA-1888 / DSM 6725 / KCTC 15123 / Z-1320) (Anaerocellum thermophilum).